We begin with the raw amino-acid sequence, 446 residues long: Exodeoxyribonuclease 7 large subunit (446 aa).

This sequence belongs to the XseA family. Heterooligomer composed of large and small subunits.

It is found in the cytoplasm. It carries out the reaction Exonucleolytic cleavage in either 5'- to 3'- or 3'- to 5'-direction to yield nucleoside 5'-phosphates.. Functionally, bidirectionally degrades single-stranded DNA into large acid-insoluble oligonucleotides, which are then degraded further into small acid-soluble oligonucleotides. In Streptococcus gordonii (strain Challis / ATCC 35105 / BCRC 15272 / CH1 / DL1 / V288), this protein is Exodeoxyribonuclease 7 large subunit.